Here is a 280-residue protein sequence, read N- to C-terminus: Phosphonoacetaldehyde hydrolase (280 aa).

Residue aspartate 23 is the Nucleophile of the active site. Residues aspartate 23 and alanine 25 each contribute to the Mg(2+) site. The active-site Schiff-base intermediate with substrate is the lysine 64. Aspartate 197 serves as a coordination point for Mg(2+).

This sequence belongs to the HAD-like hydrolase superfamily. PhnX family. Homodimer. Mg(2+) is required as a cofactor.

The enzyme catalyses phosphonoacetaldehyde + H2O = acetaldehyde + phosphate + H(+). Its function is as follows. Involved in phosphonate degradation. The sequence is that of Phosphonoacetaldehyde hydrolase from Bordetella avium (strain 197N).